The primary structure comprises 466 residues: Cysteine--tRNA ligase (466 aa).

C33 lines the Zn(2+) pocket. Positions 35-45 (PTVYDYAHIGN) match the 'HIGH' region motif. Zn(2+) contacts are provided by C221, H246, and E250. The 'KMSKS' region motif lies at 279–283 (KMSKS). Position 282 (K282) interacts with ATP.

This sequence belongs to the class-I aminoacyl-tRNA synthetase family. Monomer. It depends on Zn(2+) as a cofactor.

Its subcellular location is the cytoplasm. The enzyme catalyses tRNA(Cys) + L-cysteine + ATP = L-cysteinyl-tRNA(Cys) + AMP + diphosphate. This Rhizobium meliloti (strain 1021) (Ensifer meliloti) protein is Cysteine--tRNA ligase.